The following is a 107-amino-acid chain: Inner membrane protein YgbE (107 aa).

Over 1–20 (MRNSHNITLTNNDSLTEDEE) the chain is Cytoplasmic. A helical transmembrane segment spans residues 21–43 (TTWSLPGAVVGFISWLFALAMPM). At 44–52 (LIYGSNTLF) the chain is on the periplasmic side. A helical transmembrane segment spans residues 53–75 (FFIYTWPFFLALMPVAVVVGIAL). The Cytoplasmic segment spans residues 76-86 (HSLMDGKLRYS). The helical transmembrane segment at 87–106 (IVFTLVTVGIMFGALFMWLL) threads the bilayer. Position 107 (G107) is a topological domain, periplasmic.

The protein resides in the cell inner membrane. The chain is Inner membrane protein YgbE (ygbE) from Escherichia coli (strain K12).